The sequence spans 141 residues: VLSAADKTNVKGVFSKIGGHADEYGAETLERMFVAYPQTKTYFPHFDLQHGSAQIKAHGKKVAAALVEAVNHIDDIAGALSKLSDLHAQKLRVDPVNFKFLGHCFLVVVAIHHPSALTPEVHASLDKFLCAVGTVLTAKYR.

Residues 1–141 (VLSAADKTNV…VGTVLTAKYR (141 aa)) form the Globin domain. O2 is bound at residue His58. His87 contacts heme b.

It belongs to the globin family. As to quaternary structure, heterotetramer of two alpha chains and two beta chains. Red blood cells.

In terms of biological role, involved in oxygen transport from the lung to the various peripheral tissues. The chain is Hemoglobin subunit alpha-A (HBAA) from Branta canadensis (Canada goose).